We begin with the raw amino-acid sequence, 687 residues long: Putative metabolite transport protein YDL199C (687 aa).

A disordered region spans residues 1–22 (MKPPLNMSRSNKPLTQEANSSA). Residues 1 to 122 (MKPPLNMSRS…RHSSRVLRTS (122 aa)) are Extracellular-facing. Polar residues predominate over residues 7-22 (MSRSNKPLTQEANSSA). Residue Ser90 is modified to Phosphoserine. Residues 123-143 (FISFVVLVSSLSGLDQGLISG) form a helical membrane-spanning segment. At 144–164 (NVMTLSFQKYFHYPLTSPLGN) the chain is on the cytoplasmic side. Residues 165 to 185 (IVSIVNLGAFMASLFVYSGIL) traverse the membrane as a helical segment. The Extracellular segment spans residues 186 to 192 (EPCSRKK). Residues 193–213 (MLQISTMIYSLGAIVQVLALN) traverse the membrane as a helical segment. The Cytoplasmic portion of the chain corresponds to 214–216 (QWC). The chain crosses the membrane as a helical span at residues 217-237 (LLLGRFLLGVGMGFAFSMVII). Residues 238 to 251 (YQFEFPLPCIRKRT) lie on the Extracellular side of the membrane. A helical membrane pass occupies residues 252–272 (LISIQCVSSVIAYSFGIWINC). Topologically, residues 273–283 (AFRYLGFAWRY) are cytoplasmic. Residues 284-304 (PLSTHVALGIILNLMSFYLIL) form a helical membrane-spanning segment. The Extracellular segment spans residues 305–410 (ESPSWLLKQK…MGRGERKSIY (106 aa)). The chain crosses the membrane as a helical span at residues 411–431 (LTGLNALIYSIVILAYVPLVL). Residues 432–439 (RKRKEKTN) are Cytoplasmic-facing. The chain crosses the membrane as a helical span at residues 440–460 (VLLGSIVMCALLFTISFTDWF). Residues 461-469 (PKSTTRYIS) are Extracellular-facing. The chain crosses the membrane as a helical span at residues 470–490 (ILFAVFLFTHFISWDSIGWVM). Topologically, residues 491–500 (TIELLPHLSQ) are cytoplasmic. Residues 501-521 (APVILLVSNFYWIFKWFVSLI) form a helical membrane-spanning segment. Residues 522–533 (TPILIDRLSWKF) are Extracellular-facing. Residues 534 to 554 (YLIPSLSSFISIIFVLKIFPI) form a helical membrane-spanning segment. The Cytoplasmic portion of the chain corresponds to 555 to 687 (ETRDERLDSD…QNSPGDMAVA (133 aa)). Disordered regions lie at residues 561 to 587 (LDSD…SEFS) and 654 to 687 (SFHN…MAVA). Over residues 660-673 (DPNISDNIAANKPS) the composition is skewed to polar residues.

Belongs to the major facilitator superfamily. Sugar transporter (TC 2.A.1.1) family.

It localises to the membrane. In Saccharomyces cerevisiae (strain ATCC 204508 / S288c) (Baker's yeast), this protein is Putative metabolite transport protein YDL199C.